The following is a 372-amino-acid chain: Cytochrome b (372 aa).

4 helical membrane-spanning segments follow: residues 25–45 (FGSMLLTCLALQTMTGFFLAI), 69–90 (WMMQNLHAIGASMFFICIYIHI), 105–125 (WLSGTTLLIILMATAFFGYVL), and 170–190 (FFALHFILPFTIISMSSIHIM). Positions 75 and 89 each coordinate heme b. His174 and His188 together coordinate heme b. Position 193 (His193) interacts with a ubiquinone. A run of 4 helical transmembrane segments spans residues 218–238 (HKDMLMFTIMITMLFIIMSFT), 280–300 (LGGTVALVLSVTILLTMPFTH), 312–332 (LMQFMFWTLVATFITITWAAT), and 339–358 (FTSIGQVTAILYFLFFTMNP).

Belongs to the cytochrome b family. The cytochrome bc1 complex contains 3 respiratory subunits (MT-CYB, CYC1 and UQCRFS1), 2 core proteins (UQCRC1 and UQCRC2) and probably 6 low-molecular weight proteins. The cofactor is heme b.

The protein resides in the mitochondrion inner membrane. Functionally, component of the ubiquinol-cytochrome c reductase complex (complex III or cytochrome b-c1 complex) that is part of the mitochondrial respiratory chain. The b-c1 complex mediates electron transfer from ubiquinol to cytochrome c. Contributes to the generation of a proton gradient across the mitochondrial membrane that is then used for ATP synthesis. This chain is Cytochrome b (MT-CYB), found in Pantherophis vulpinus (Western fox snake).